The chain runs to 122 residues: Large ribosomal subunit protein uL14 (122 aa).

Belongs to the universal ribosomal protein uL14 family. In terms of assembly, part of the 50S ribosomal subunit. Forms a cluster with proteins L3 and L19. In the 70S ribosome, L14 and L19 interact and together make contacts with the 16S rRNA in bridges B5 and B8.

Binds to 23S rRNA. Forms part of two intersubunit bridges in the 70S ribosome. In Herpetosiphon aurantiacus (strain ATCC 23779 / DSM 785 / 114-95), this protein is Large ribosomal subunit protein uL14.